The primary structure comprises 349 residues: Glycerol-3-phosphate dehydrogenase [NAD(+)], cytoplasmic (349 aa).

10-15 (GSGNWG) contacts NAD(+). K120 serves as a coordination point for substrate. A153 is an NAD(+) binding site. S154 carries the post-translational modification Phosphoserine. The active-site Proton acceptor is K204. R269 is a binding site for NAD(+). A substrate-binding site is contributed by 269-270 (RN). K289 carries the N6-succinyllysine modification. NAD(+)-binding residues include K296 and Q298. Y326 bears the Phosphotyrosine mark.

It belongs to the NAD-dependent glycerol-3-phosphate dehydrogenase family. In terms of assembly, homodimer.

It localises to the cytoplasm. The catalysed reaction is sn-glycerol 3-phosphate + NAD(+) = dihydroxyacetone phosphate + NADH + H(+). In terms of biological role, has glycerol-3-phosphate dehydrogenase activity. The polypeptide is Glycerol-3-phosphate dehydrogenase [NAD(+)], cytoplasmic (GPD1) (Pongo abelii (Sumatran orangutan)).